Reading from the N-terminus, the 100-residue chain is Elevenin (100 aa).

An N-terminal signal peptide occupies residues 1-24; that stretch reads MALSQKALLVLVLSMLLTASDSWA. A disulfide bridge connects residues cysteine 29 and cysteine 38. Residues 44–100 constitute a propeptide that is removed on maturation; the sequence is KRGGDSLSVGGSAELDDTLTDPFLKSEEPKEWRELTRLSRVLQTFLSHPTGEMEQHD.

It belongs to the elevenin family. In terms of assembly, monomer. As to expression, expressed by the venom duct.

The protein resides in the secreted. In terms of biological role, may mimic the function of prey elevenin neuropeptide. In vivo, intracranial injection in mice induces hyperactivity. The protein is Elevenin of Conus ammiralis (Admiral cone).